Consider the following 426-residue polypeptide: Glutamate-1-semialdehyde 2,1-aminomutase (426 aa).

K265 carries the post-translational modification N6-(pyridoxal phosphate)lysine.

It belongs to the class-III pyridoxal-phosphate-dependent aminotransferase family. HemL subfamily. As to quaternary structure, homodimer. Requires pyridoxal 5'-phosphate as cofactor.

It localises to the cytoplasm. The catalysed reaction is (S)-4-amino-5-oxopentanoate = 5-aminolevulinate. It participates in porphyrin-containing compound metabolism; protoporphyrin-IX biosynthesis; 5-aminolevulinate from L-glutamyl-tRNA(Glu): step 2/2. The protein is Glutamate-1-semialdehyde 2,1-aminomutase of Klebsiella pneumoniae subsp. pneumoniae (strain ATCC 700721 / MGH 78578).